We begin with the raw amino-acid sequence, 350 residues long: DNA primase small subunit PriS (350 aa).

Active-site residues include D97, D99, and D251.

It belongs to the eukaryotic-type primase small subunit family. In terms of assembly, heterodimer of a small subunit (PriS) and a large subunit (PriL). Requires Mg(2+) as cofactor. The cofactor is Mn(2+). Zn(2+) is required as a cofactor.

Its function is as follows. Catalytic subunit of DNA primase, an RNA polymerase that catalyzes the synthesis of short RNA molecules used as primers for DNA polymerase during DNA replication. The small subunit contains the primase catalytic core and has DNA synthesis activity on its own. Binding to the large subunit stabilizes and modulates the activity, increasing the rate of DNA synthesis while decreasing the length of the DNA fragments, and conferring RNA synthesis capability. The DNA polymerase activity may enable DNA primase to also catalyze primer extension after primer synthesis. May also play a role in DNA repair. The chain is DNA primase small subunit PriS from Methanocaldococcus jannaschii (strain ATCC 43067 / DSM 2661 / JAL-1 / JCM 10045 / NBRC 100440) (Methanococcus jannaschii).